A 652-amino-acid chain; its full sequence is Na(+)/H(+) antiporter NhaA 3 (652 aa).

Positions 1–428 (MTGEIPRGRR…GASLTTWLVF (428 aa)) are na(+)/H(+) antiporter NhaA. Helical transmembrane passes span 32–52 (ETGS…WVNL), 78–98 (LRFW…GLEV), 114–134 (MLPL…YLAF), 142–162 (VGWG…LAVL), 173–193 (FLLT…AIAY), 200–220 (MALF…AAGV), 227–249 (LLLG…VVGL), 306–326 (HPWA…GVVV), 342–362 (GVLF…SMLV), 376–396 (WAAI…ALLI), and 411–431 (VGIL…FRLA). Positions 429–623 (RLAARLAPAR…LSAAVMSAFA (195 aa)) constitute a Thioredoxin domain. The interval 626–652 (RLRPEGGREPDHRSEAGSEQPDEEPGT) is disordered. Basic and acidic residues predominate over residues 627–641 (LRPEGGREPDHRSEA).

This sequence in the N-terminal section; belongs to the NhaA Na(+)/H(+) (TC 2.A.33) antiporter family.

It is found in the cell membrane. It carries out the reaction Na(+)(in) + 2 H(+)(out) = Na(+)(out) + 2 H(+)(in). Na(+)/H(+) antiporter that extrudes sodium in exchange for external protons. The sequence is that of Na(+)/H(+) antiporter NhaA 3 from Salinispora tropica (strain ATCC BAA-916 / DSM 44818 / JCM 13857 / NBRC 105044 / CNB-440).